A 726-amino-acid chain; its full sequence is Methionine--tRNA ligase (726 aa).

The 'HIGH' region motif lies at 12–22 (PYVNNIPHLGN). C143, C146, C155, and C158 together coordinate Zn(2+). Positions 330–334 (KFSKS) match the 'KMSKS' region motif. K333 lines the ATP pocket. The tRNA-binding domain maps to 562-667 (FSEQICLKTV…DNPIPGERVI (106 aa)).

It belongs to the class-I aminoacyl-tRNA synthetase family. MetG type 1 subfamily. As to quaternary structure, homodimer. It depends on Zn(2+) as a cofactor.

It localises to the cytoplasm. It catalyses the reaction tRNA(Met) + L-methionine + ATP = L-methionyl-tRNA(Met) + AMP + diphosphate. In terms of biological role, is required not only for elongation of protein synthesis but also for the initiation of all mRNA translation through initiator tRNA(fMet) aminoacylation. This chain is Methionine--tRNA ligase, found in Borrelia recurrentis (strain A1).